The sequence spans 140 residues: Nucleoside diphosphate kinase (140 aa).

Positions 11, 59, 87, 93, 104, and 114 each coordinate ATP. H117 functions as the Pros-phosphohistidine intermediate in the catalytic mechanism.

The protein belongs to the NDK family. As to quaternary structure, homotetramer. Mg(2+) is required as a cofactor.

It localises to the cytoplasm. The enzyme catalyses a 2'-deoxyribonucleoside 5'-diphosphate + ATP = a 2'-deoxyribonucleoside 5'-triphosphate + ADP. The catalysed reaction is a ribonucleoside 5'-diphosphate + ATP = a ribonucleoside 5'-triphosphate + ADP. Major role in the synthesis of nucleoside triphosphates other than ATP. The ATP gamma phosphate is transferred to the NDP beta phosphate via a ping-pong mechanism, using a phosphorylated active-site intermediate. The protein is Nucleoside diphosphate kinase of Bradyrhizobium sp. (strain ORS 278).